We begin with the raw amino-acid sequence, 258 residues long: MKEILITNDDGYESEGLKKLIKMLTKEFKAKITIVAPASEKSACSHSITLTKPLRFVKVGKRFYKLDDGTPADCVYLALHALYKKRLPDLVISGINKGANVGEDITYSGTCAGAMEAVLQGIPAIALSQFYKKSEKELDYKNALQITKKIIQNIFDKGFPLEKKEFLNINFPAKSKIKGIKICKAGKRVYNFEAHSNVNPRGVEYYWLAAANLDFEDEKNSDIALLKKGYATITPIMLDLTAYERMKKVKKWLKANDE.

The a divalent metal cation site is built by Asp-9, Asp-10, Ser-42, and Asn-96.

The protein belongs to the SurE nucleotidase family. A divalent metal cation is required as a cofactor.

It is found in the cytoplasm. It catalyses the reaction a ribonucleoside 5'-phosphate + H2O = a ribonucleoside + phosphate. Its function is as follows. Nucleotidase that shows phosphatase activity on nucleoside 5'-monophosphates. In Campylobacter jejuni subsp. jejuni serotype O:2 (strain ATCC 700819 / NCTC 11168), this protein is 5'-nucleotidase SurE.